Reading from the N-terminus, the 202-residue chain is Imidazoleglycerol-phosphate dehydratase (202 aa).

It belongs to the imidazoleglycerol-phosphate dehydratase family.

Its subcellular location is the cytoplasm. The catalysed reaction is D-erythro-1-(imidazol-4-yl)glycerol 3-phosphate = 3-(imidazol-4-yl)-2-oxopropyl phosphate + H2O. Its pathway is amino-acid biosynthesis; L-histidine biosynthesis; L-histidine from 5-phospho-alpha-D-ribose 1-diphosphate: step 6/9. This is Imidazoleglycerol-phosphate dehydratase from Corynebacterium diphtheriae (strain ATCC 700971 / NCTC 13129 / Biotype gravis).